Here is a 142-residue protein sequence, read N- to C-terminus: Cytochrome c-type biogenesis protein CcmE (142 aa).

Residues 1–2 (MK) lie on the Cytoplasmic side of the membrane. The chain crosses the membrane as a helical; Signal-anchor for type II membrane protein span at residues 3 to 23 (GKYLLGILVILGALGYMVFGG). Residues 24–142 (LGRNLVYFLT…EVRKLIEEAQ (119 aa)) lie on the Periplasmic side of the membrane. Residues His-118 and Tyr-122 each contribute to the heme site.

The protein belongs to the CcmE/CycJ family.

It is found in the cell inner membrane. In terms of biological role, heme chaperone required for the biogenesis of c-type cytochromes. Transiently binds heme delivered by CcmC and transfers the heme to apo-cytochromes in a process facilitated by CcmF and CcmH. This is Cytochrome c-type biogenesis protein CcmE from Thermus thermophilus (strain ATCC 27634 / DSM 579 / HB8).